The sequence spans 236 residues: Small ribosomal subunit protein uS3 (236 aa).

Residues 39–107 (IRSYVMEELK…ETSLNIVEIR (69 aa)) form the KH type-2 domain. Positions 214 to 236 (ASEHRATRNDNSSSSLNRRRESV) are disordered.

It belongs to the universal ribosomal protein uS3 family. Part of the 30S ribosomal subunit. Forms a tight complex with proteins S10 and S14.

Functionally, binds the lower part of the 30S subunit head. Binds mRNA in the 70S ribosome, positioning it for translation. In Bartonella bacilliformis (strain ATCC 35685 / KC583 / Herrer 020/F12,63), this protein is Small ribosomal subunit protein uS3.